We begin with the raw amino-acid sequence, 115 residues long: NADH-ubiquinone oxidoreductase chain 3 (115 aa).

3 helical membrane passes run 3-23 (LMLT…IAFW), 55-75 (FFLV…LLPL), and 86-106 (TMLT…AYEW).

This sequence belongs to the complex I subunit 3 family. As to quaternary structure, core subunit of respiratory chain NADH dehydrogenase (Complex I) which is composed of 45 different subunits. Interacts with TMEM186. Interacts with TMEM242.

It is found in the mitochondrion inner membrane. The enzyme catalyses a ubiquinone + NADH + 5 H(+)(in) = a ubiquinol + NAD(+) + 4 H(+)(out). Core subunit of the mitochondrial membrane respiratory chain NADH dehydrogenase (Complex I) which catalyzes electron transfer from NADH through the respiratory chain, using ubiquinone as an electron acceptor. Essential for the catalytic activity of complex I. In Ceratotherium simum (White rhinoceros), this protein is NADH-ubiquinone oxidoreductase chain 3.